The following is a 376-amino-acid chain: Mitochondrial distribution and morphology protein 34 (376 aa).

In terms of domain architecture, SMP-LTD spans 1–194; it reads MSFTFNWPRF…LPGIIHRLSQ (194 aa). Disordered regions lie at residues 207–249 and 286–376; these read SKHP…PKIV and SVPP…LHPS. A compositionally biased stretch (acidic residues) spans 218–230; sequence EISEPGDYGEEGE. Over residues 306–318 the composition is skewed to basic residues; the sequence is VKAKRKRTYRLGG. A compositionally biased stretch (basic and acidic residues) spans 350-362; that stretch reads MDRYFRSYDDHSR.

This sequence belongs to the MDM34 family. Component of the ER-mitochondria encounter structure (ERMES) or MDM complex, composed of MMM1, MDM10, MDM12 and MDM34.

It is found in the mitochondrion outer membrane. In terms of biological role, component of the ERMES/MDM complex, which serves as a molecular tether to connect the endoplasmic reticulum (ER) and mitochondria. Components of this complex are involved in the control of mitochondrial shape and protein biogenesis, and function in nonvesicular lipid trafficking between the ER and mitochondria. MDM34 is required for the interaction of the ER-resident membrane protein MMM1 and the outer mitochondrial membrane-resident beta-barrel protein MDM10. The chain is Mitochondrial distribution and morphology protein 34 from Laccaria bicolor (strain S238N-H82 / ATCC MYA-4686) (Bicoloured deceiver).